Consider the following 503-residue polypeptide: GMP synthase [glutamine-hydrolyzing] (503 aa).

Residues 1–178 (MREANVYSEI…LHRAAGIPAD (178 aa)) enclose the Glutamine amidotransferase type-1 domain. Catalysis depends on Cys-60, which acts as the Nucleophile. Active-site residues include His-152 and Glu-154. A GMPS ATP-PPase domain is found at 179–377 (WNSGNVIADQ…LGLPEVIVGR (199 aa)). An ATP-binding site is contributed by 206-212 (SGGVDSA).

Homodimer.

The catalysed reaction is XMP + L-glutamine + ATP + H2O = GMP + L-glutamate + AMP + diphosphate + 2 H(+). It functions in the pathway purine metabolism; GMP biosynthesis; GMP from XMP (L-Gln route): step 1/1. Functionally, catalyzes the synthesis of GMP from XMP. This is GMP synthase [glutamine-hydrolyzing] from Leifsonia xyli subsp. xyli (strain CTCB07).